The sequence spans 347 residues: NADH-ubiquinone oxidoreductase chain 2 (347 aa).

11 helical membrane-spanning segments follow: residues 1 to 21 (MNPMIFTSLLATIMLGTSIVL), 25 to 45 (HWFLTWLGFEMNMMAIIPVLM), 68 to 88 (MILVLAIIINLMYSGQWTIMI), 96 to 116 (MLITIALVMKLGLAPFHFWVP), 122 to 142 (VSLSSGLILLTWQKIAPLSLL), 145 to 165 (IFPSINTNLLLIMSLLSIMIG), 178 to 198 (IMAYSSIAHMGWMIAIMIYNP), 201 to 221 (SLLNLLIYIMMTSSMFMLLII), 239 to 259 (IVVSTMMVILLSLGGLPPLTG), 274 to 294 (SSVMLPSLMAILALLNLFFYM), and 326 to 346 (MMSLISMSMLALPLAPSLITL).

This sequence belongs to the complex I subunit 2 family. Core subunit of respiratory chain NADH dehydrogenase (Complex I) which is composed of 45 different subunits. Interacts with TMEM242.

The protein localises to the mitochondrion inner membrane. It catalyses the reaction a ubiquinone + NADH + 5 H(+)(in) = a ubiquinol + NAD(+) + 4 H(+)(out). Core subunit of the mitochondrial membrane respiratory chain NADH dehydrogenase (Complex I) which catalyzes electron transfer from NADH through the respiratory chain, using ubiquinone as an electron acceptor. Essential for the catalytic activity and assembly of complex I. The sequence is that of NADH-ubiquinone oxidoreductase chain 2 from Sylvisorex lunaris (Moon forest shrew).